The sequence spans 97 residues: MSKITAKDVRKVAQLARLDLPDDQIATYTEQLEKILAYVAQLEEIDTTNVKPTTRAVEVVNVTRTDEVSATPVREELLNLAPQREGDFFRVPKILAE.

Belongs to the GatC family. As to quaternary structure, heterotrimer of A, B and C subunits.

The catalysed reaction is L-glutamyl-tRNA(Gln) + L-glutamine + ATP + H2O = L-glutaminyl-tRNA(Gln) + L-glutamate + ADP + phosphate + H(+). The enzyme catalyses L-aspartyl-tRNA(Asn) + L-glutamine + ATP + H2O = L-asparaginyl-tRNA(Asn) + L-glutamate + ADP + phosphate + 2 H(+). In terms of biological role, allows the formation of correctly charged Asn-tRNA(Asn) or Gln-tRNA(Gln) through the transamidation of misacylated Asp-tRNA(Asn) or Glu-tRNA(Gln) in organisms which lack either or both of asparaginyl-tRNA or glutaminyl-tRNA synthetases. The reaction takes place in the presence of glutamine and ATP through an activated phospho-Asp-tRNA(Asn) or phospho-Glu-tRNA(Gln). This is Aspartyl/glutamyl-tRNA(Asn/Gln) amidotransferase subunit C from Prochlorococcus marinus (strain MIT 9303).